The following is a 354-amino-acid chain: Serum paraoxonase/lactonase 3 (354 aa).

A disulfide bridge links C42 with C352. N50 is a glycosylation site (N-linked (GlcNAc...) asparagine). The Ca(2+) site is built by E53 and D54. Residue H114 is the Proton acceptor of the active site. Residue I116 coordinates Ca(2+). The residue at position 165 (S165) is a Phosphoserine. Residues N167, D168, N223, D268, and N269 each coordinate Ca(2+). N-linked (GlcNAc...) asparagine glycans are attached at residues N269 and N323.

It belongs to the paraoxonase family. Homodimer. The cofactor is Ca(2+). Post-translationally, glycosylated. In terms of processing, the signal sequence is not cleaved.

Its subcellular location is the secreted. The protein localises to the extracellular space. It catalyses the reaction a phenyl acetate + H2O = a phenol + acetate + H(+). The catalysed reaction is An aryl dialkyl phosphate + H2O = dialkyl phosphate + an aryl alcohol.. It carries out the reaction an N-acyl-L-homoserine lactone + H2O = an N-acyl-L-homoserine + H(+). In terms of biological role, has low activity towards the organophosphate paraxon and aromatic carboxylic acid esters. Rapidly hydrolyzes lactones such as statin prodrugs (e.g. lovastatin). Hydrolyzes aromatic lactones and 5- or 6-member ring lactones with aliphatic substituents but not simple lactones or those with polar substituents. The sequence is that of Serum paraoxonase/lactonase 3 (Pon3) from Rattus norvegicus (Rat).